An 81-amino-acid chain; its full sequence is Putative membrane protein insertion efficiency factor (81 aa).

The tract at residues 61-81 (NPGGYDPVPPIPTSRSSSMAE) is disordered.

The protein belongs to the UPF0161 family.

It is found in the cell inner membrane. Functionally, could be involved in insertion of integral membrane proteins into the membrane. The protein is Putative membrane protein insertion efficiency factor of Pseudomonas fluorescens (strain Pf0-1).